The sequence spans 433 residues: tRNA-2-methylthio-N(6)-dimethylallyladenosine synthase (433 aa).

Residues 3-118 (KKLFIQTLGC…ISTAVKTPKF (116 aa)) enclose the MTTase N-terminal domain. Residues cysteine 12, cysteine 49, cysteine 81, cysteine 150, cysteine 154, and cysteine 157 each contribute to the [4Fe-4S] cluster site. The region spanning 136–369 (RGSPYKSHIN…QSRHNEILDE (234 aa)) is the Radical SAM core domain. The 62-residue stretch at 372–433 (AAQEGKILDV…RMVLYGELAN (62 aa)) folds into the TRAM domain.

It belongs to the methylthiotransferase family. MiaB subfamily. Monomer. Requires [4Fe-4S] cluster as cofactor.

The protein resides in the cytoplasm. It carries out the reaction N(6)-dimethylallyladenosine(37) in tRNA + (sulfur carrier)-SH + AH2 + 2 S-adenosyl-L-methionine = 2-methylsulfanyl-N(6)-dimethylallyladenosine(37) in tRNA + (sulfur carrier)-H + 5'-deoxyadenosine + L-methionine + A + S-adenosyl-L-homocysteine + 2 H(+). Catalyzes the methylthiolation of N6-(dimethylallyl)adenosine (i(6)A), leading to the formation of 2-methylthio-N6-(dimethylallyl)adenosine (ms(2)i(6)A) at position 37 in tRNAs that read codons beginning with uridine. The chain is tRNA-2-methylthio-N(6)-dimethylallyladenosine synthase from Campylobacter curvus (strain 525.92).